The sequence spans 75 residues: uncharacterized protein (75 aa).

This is an uncharacterized protein from Saccharomyces cerevisiae (strain ATCC 204508 / S288c) (Baker's yeast).